The primary structure comprises 60 residues: DNA-directed RNA polymerase subunit Rpo6 (60 aa).

Belongs to the archaeal Rpo6/eukaryotic RPB6 RNA polymerase subunit family. In terms of assembly, part of the RNA polymerase complex.

It localises to the cytoplasm. The catalysed reaction is RNA(n) + a ribonucleoside 5'-triphosphate = RNA(n+1) + diphosphate. Functionally, DNA-dependent RNA polymerase (RNAP) catalyzes the transcription of DNA into RNA using the four ribonucleoside triphosphates as substrates. The protein is DNA-directed RNA polymerase subunit Rpo6 of Picrophilus torridus (strain ATCC 700027 / DSM 9790 / JCM 10055 / NBRC 100828 / KAW 2/3).